The sequence spans 296 residues: MGTETVVHDQARWAMAAMERRLAVAKAQLLQQQQQKNEKDKKGTSDVDVSMKESHQADSLPTPSKTSIKKVDPKDDDSVAYTKLSHPVDENLLATNVKFSSAKGTIVDKVLHNLLRSGDSAQKYLQGTKSVKLDNYILLDNFVQSRSSASGSKKASQKDSKRSKSRMSMKRLKKSGALHIPKDLQKFDLFKPMHGMWESYMMKLIKVTGKIQLSLTLLSADLHGAFMFVAECKIASFTGVQGIMVRETSETFGIITRDDKFRVVPKKLSVFIIQLDCWKITLHGDKFISRDNIVQR.

Disordered regions lie at residues 29 to 74 and 148 to 173; these read LLQQ…VDPK and SASG…KRLK. Residues 36 to 56 show a composition bias toward basic and acidic residues; the sequence is KNEKDKKGTSDVDVSMKESHQ. Residues 57–66 show a composition bias toward polar residues; that stretch reads ADSLPTPSKT. The Nuclear localization signal signature appears at 160–167; sequence SKRSKSRM. The segment covering 163–173 has biased composition (basic residues); sequence SKSRMSMKRLK.

The protein belongs to the eukaryotic/archaeal RNase P protein component 1 family. In terms of assembly, component of nuclear RNase MRP complexes. Several subunits of RNase P are also part of the RNase MRP complex. RNase MRP consists of a catalytic RNA moiety and several protein subunits.

It localises to the nucleus. Its function is as follows. Component of the MRP ribonuclease complex, which cleaves pre-rRNA sequences. Required for rRNA maturation, including 5.8S rRNA processing. Seems not involved in tRNA maturation. The protein is Ribonuclease MRP protein subunit POP4 of Arabidopsis thaliana (Mouse-ear cress).